The primary structure comprises 44 residues: Thaumatin-like protein 5 (44 aa).

The protein belongs to the thaumatin family.

The sequence is that of Thaumatin-like protein 5 from Glebionis coronaria (Crown daisy).